The primary structure comprises 142 residues: Prefoldin subunit alpha 1 (142 aa).

Belongs to the prefoldin subunit alpha family. Heterohexamer of two alpha and four beta subunits.

The protein localises to the cytoplasm. Molecular chaperone capable of stabilizing a range of proteins. Seems to fulfill an ATP-independent, HSP70-like function in archaeal de novo protein folding. This Methanocaldococcus jannaschii (strain ATCC 43067 / DSM 2661 / JAL-1 / JCM 10045 / NBRC 100440) (Methanococcus jannaschii) protein is Prefoldin subunit alpha 1 (pfdA1).